The sequence spans 275 residues: Myoblast determination protein 1 homolog 2 (275 aa).

The region spanning 84–135 (DRRKAATMRERRRLGKVNDAFENLKRCTSNNPNQRLPKVEILRNAISYIESL) is the bHLH domain. Over residues 232–265 (SGQEGSEGSPCSPQEGSILSRNGGTVPSPTNCPQ) the composition is skewed to polar residues. The disordered stretch occupies residues 232–275 (SGQEGSEGSPCSPQEGSILSRNGGTVPSPTNCPQPSHDPIYQVL).

Efficient DNA binding requires dimerization with another bHLH protein.

Its subcellular location is the nucleus. In terms of biological role, may act as a transcriptional activator that promotes transcription of muscle-specific target genes and plays a role in muscle differentiation. This Oncorhynchus mykiss (Rainbow trout) protein is Myoblast determination protein 1 homolog 2 (myod2).